The following is a 150-amino-acid chain: 3-dehydroquinate dehydratase (150 aa).

Catalysis depends on Y25, which acts as the Proton acceptor. Residues N76, H82, and D89 each coordinate substrate. H102 (proton donor) is an active-site residue. Substrate is bound by residues 103 to 104 and R113; that span reads LS.

It belongs to the type-II 3-dehydroquinase family. In terms of assembly, homododecamer.

It catalyses the reaction 3-dehydroquinate = 3-dehydroshikimate + H2O. The protein operates within metabolic intermediate biosynthesis; chorismate biosynthesis; chorismate from D-erythrose 4-phosphate and phosphoenolpyruvate: step 3/7. Its function is as follows. Catalyzes a trans-dehydration via an enolate intermediate. This chain is 3-dehydroquinate dehydratase, found in Trichodesmium erythraeum (strain IMS101).